We begin with the raw amino-acid sequence, 784 residues long: ATP-dependent 6-phosphofructokinase, platelet type (784 aa).

Methionine 1 is subject to N-acetylmethionine. Residues 1–399 (MDADDSRAPK…NLNTYKRLAI (399 aa)) form an N-terminal catalytic PFK domain 1 region. Phosphoserine occurs at positions 6, 12, and 21. Residues glycine 34, 97 to 98 (RC), and 127 to 130 (GDGS) contribute to the ATP site. Aspartate 128 is a Mg(2+) binding site. Position 142 is a phosphoserine (serine 142). Substrate is bound by residues 173-175 (SID), arginine 210, 217-219 (MGR), glutamate 273, arginine 301, and 307-310 (HVQR). The Proton acceptor role is filled by aspartate 175. Phosphoserine is present on serine 386. The residue at position 395 (lysine 395) is an N6-acetyllysine. Residues 400-411 (KLPDDQIPKTNC) form an interdomain linker region. Residues 412–784 (NVAVINVGAP…QLEHVQPWSV (373 aa)) form a C-terminal regulatory PFK domain 2 region. Arginine 481 is a beta-D-fructose 2,6-bisphosphate binding site. Lysine 486 is subject to N6-acetyllysine. Residues 538 to 542 (TVSNN), arginine 576, 583 to 585 (MGG), and glutamate 639 each bind beta-D-fructose 2,6-bisphosphate. O-linked (GlcNAc) serine glycosylation is present at serine 540. Phosphotyrosine is present on tyrosine 651. Beta-D-fructose 2,6-bisphosphate contacts are provided by residues arginine 665 and 671–674 (HMQQ). An N6-acetyllysine modification is found at lysine 688. Residue arginine 744 coordinates beta-D-fructose 2,6-bisphosphate. Position 783 is a phosphoserine (serine 783).

The protein belongs to the phosphofructokinase type A (PFKA) family. ATP-dependent PFK group I subfamily. Eukaryotic two domain clade 'E' sub-subfamily. As to quaternary structure, homo- and heterotetramers. Phosphofructokinase (PFK) enzyme functions as a tetramer composed of different combinations of 3 types of subunits, called PFKM (M), PFKL (L) and PFKP (P). The composition of the PFK tetramer differs according to the tissue type it is present in. The kinetic and regulatory properties of the tetrameric enzyme are dependent on the subunit composition, hence can vary across tissues. Interacts with ATG4B; promoting phosphorylation of ATG4B. Requires Mg(2+) as cofactor. Post-translationally, glcNAcylation decreases enzyme activity. Phosphorylation at Ser-386 promotes interaction with ATG4B.

Its subcellular location is the cytoplasm. It carries out the reaction beta-D-fructose 6-phosphate + ATP = beta-D-fructose 1,6-bisphosphate + ADP + H(+). Its pathway is carbohydrate degradation; glycolysis; D-glyceraldehyde 3-phosphate and glycerone phosphate from D-glucose: step 3/4. Its activity is regulated as follows. Allosterically activated by ADP, AMP, or fructose 2,6-bisphosphate, and allosterically inhibited by ATP or citrate. Its function is as follows. Catalyzes the phosphorylation of D-fructose 6-phosphate to fructose 1,6-bisphosphate by ATP, the first committing step of glycolysis. The protein is ATP-dependent 6-phosphofructokinase, platelet type (PFKP) of Pongo abelii (Sumatran orangutan).